Reading from the N-terminus, the 176-residue chain is Peptidyl-tRNA hydrolase (176 aa).

Residue tyrosine 14 coordinates tRNA. The active-site Proton acceptor is histidine 19. The tRNA site is built by tyrosine 65, asparagine 67, and asparagine 113.

Belongs to the PTH family. Monomer.

It localises to the cytoplasm. The catalysed reaction is an N-acyl-L-alpha-aminoacyl-tRNA + H2O = an N-acyl-L-amino acid + a tRNA + H(+). In terms of biological role, hydrolyzes ribosome-free peptidyl-tRNAs (with 1 or more amino acids incorporated), which drop off the ribosome during protein synthesis, or as a result of ribosome stalling. Its function is as follows. Catalyzes the release of premature peptidyl moieties from peptidyl-tRNA molecules trapped in stalled 50S ribosomal subunits, and thus maintains levels of free tRNAs and 50S ribosomes. The polypeptide is Peptidyl-tRNA hydrolase (Phytoplasma mali (strain AT)).